The sequence spans 245 residues: Probable 2-phosphosulfolactate phosphatase (245 aa).

This sequence belongs to the ComB family. Requires Mg(2+) as cofactor.

The catalysed reaction is (2R)-O-phospho-3-sulfolactate + H2O = (2R)-3-sulfolactate + phosphate. This chain is Probable 2-phosphosulfolactate phosphatase, found in Trichormus variabilis (strain ATCC 29413 / PCC 7937) (Anabaena variabilis).